The chain runs to 364 residues: DNA replication and repair protein RecF (364 aa).

30–37 contributes to the ATP binding site; sequence GENGSGKT.

It belongs to the RecF family.

The protein localises to the cytoplasm. The RecF protein is involved in DNA metabolism; it is required for DNA replication and normal SOS inducibility. RecF binds preferentially to single-stranded, linear DNA. It also seems to bind ATP. The chain is DNA replication and repair protein RecF from Pseudoalteromonas translucida (strain TAC 125).